The chain runs to 259 residues: Proteasome subunit beta type-4 (259 aa).

It belongs to the peptidase T1B family. In terms of assembly, the 26S proteasome consists of a 20S proteasome core and two 19S regulatory subunits. The 20S proteasome core is composed of 28 subunits that are arranged in four stacked rings, resulting in a barrel-shaped structure. The two end rings are each formed by seven alpha subunits, and the two central rings are each formed by seven beta subunits. The catalytic chamber with the active sites is on the inside of the barrel.

It localises to the cytoplasm. The protein resides in the nucleus. Functionally, non-catalytic component of the proteasome, a multicatalytic proteinase complex which is characterized by its ability to cleave peptides with Arg, Phe, Tyr, Leu, and Glu adjacent to the leaving group at neutral or slightly basic pH. The proteasome has an ATP-dependent proteolytic activity. This Dictyostelium discoideum (Social amoeba) protein is Proteasome subunit beta type-4 (psmB4-1).